Consider the following 461-residue polypeptide: tRNA modification GTPase MnmE (461 aa).

(6S)-5-formyl-5,6,7,8-tetrahydrofolate is bound by residues Arg22, Glu87, and Arg126. In terms of domain architecture, TrmE-type G spans 222-382 (GLKTVIVGKP…LEETIFNMVV (161 aa)). Asn232 contacts K(+). GTP is bound by residues 232–237 (NVGKSS), 251–257 (TDIPGTT), and 276–279 (DTAG). Ser236 provides a ligand contact to Mg(2+). 3 residues coordinate K(+): Thr251, Ile253, and Thr256. A Mg(2+)-binding site is contributed by Thr257. (6S)-5-formyl-5,6,7,8-tetrahydrofolate is bound at residue Lys461.

Belongs to the TRAFAC class TrmE-Era-EngA-EngB-Septin-like GTPase superfamily. TrmE GTPase family. As to quaternary structure, homodimer. Heterotetramer of two MnmE and two MnmG subunits. The cofactor is K(+).

The protein localises to the cytoplasm. Functionally, exhibits a very high intrinsic GTPase hydrolysis rate. Involved in the addition of a carboxymethylaminomethyl (cmnm) group at the wobble position (U34) of certain tRNAs, forming tRNA-cmnm(5)s(2)U34. This chain is tRNA modification GTPase MnmE, found in Desulforamulus reducens (strain ATCC BAA-1160 / DSM 100696 / MI-1) (Desulfotomaculum reducens).